We begin with the raw amino-acid sequence, 158 residues long: Biotin carboxyl carrier protein of acetyl-CoA carboxylase (158 aa).

The 77-residue stretch at 81–157 folds into the Biotinyl-binding domain; it reads YATIVSPMVG…DCGQALMKVE (77 aa). N6-biotinyllysine is present on K123.

The protein localises to the plastid. Its subcellular location is the chloroplast. It participates in lipid metabolism; fatty acid biosynthesis. Its function is as follows. This protein is a component of the acetyl coenzyme A carboxylase complex; first, biotin carboxylase catalyzes the carboxylation of the carrier protein and then the transcarboxylase transfers the carboxyl group to form malonyl-CoA. The protein is Biotin carboxyl carrier protein of acetyl-CoA carboxylase (accB) of Pyropia yezoensis (Susabi-nori).